Consider the following 380-residue polypeptide: Queuine tRNA-ribosyltransferase (380 aa).

Catalysis depends on aspartate 95, which acts as the Proton acceptor. Substrate contacts are provided by residues 95 to 99, aspartate 149, glutamine 192, and glycine 219; that span reads DSGGF. Positions 250–256 are RNA binding; it reads GVGSPDS. The active-site Nucleophile is the aspartate 269. Positions 274-278 are RNA binding; important for wobble base 34 recognition; that stretch reads TRIGR. Residues cysteine 307, cysteine 309, cysteine 312, and histidine 338 each coordinate Zn(2+).

The protein belongs to the queuine tRNA-ribosyltransferase family. Homodimer. Within each dimer, one monomer is responsible for RNA recognition and catalysis, while the other monomer binds to the replacement base PreQ1. Zn(2+) serves as cofactor.

The catalysed reaction is 7-aminomethyl-7-carbaguanine + guanosine(34) in tRNA = 7-aminomethyl-7-carbaguanosine(34) in tRNA + guanine. The protein operates within tRNA modification; tRNA-queuosine biosynthesis. Its function is as follows. Catalyzes the base-exchange of a guanine (G) residue with the queuine precursor 7-aminomethyl-7-deazaguanine (PreQ1) at position 34 (anticodon wobble position) in tRNAs with GU(N) anticodons (tRNA-Asp, -Asn, -His and -Tyr). Catalysis occurs through a double-displacement mechanism. The nucleophile active site attacks the C1' of nucleotide 34 to detach the guanine base from the RNA, forming a covalent enzyme-RNA intermediate. The proton acceptor active site deprotonates the incoming PreQ1, allowing a nucleophilic attack on the C1' of the ribose to form the product. After dissociation, two additional enzymatic reactions on the tRNA convert PreQ1 to queuine (Q), resulting in the hypermodified nucleoside queuosine (7-(((4,5-cis-dihydroxy-2-cyclopenten-1-yl)amino)methyl)-7-deazaguanosine). The sequence is that of Queuine tRNA-ribosyltransferase from Geobacillus kaustophilus (strain HTA426).